The primary structure comprises 850 residues: MFWKFDLHSSSHIDTLLERDEVTLKELMDEEDILQECKAQNRKLVEFLLKSECLEDLVTFITEEPPQDMDEKIRYKYPNLSCELLTSDVSQINDRLGEDETLLKRLYAFLLNDPPLNPLLASFFSKVLSILISRKPEQIVAFLKKKDDFVNLIIKHIGTSAIMDLLLRLLTCIEPPQLRQDVLNWLNEEKIIQRLVDIVHPSQDEDRHSNASQSLCEIIRLSRDQMLQVQNSSEPDPLLATLENKEILEQLLSNIFLKEKNESAIVSAIQILLTLLETRRPAFEGHIDLCPPGVNHSVFSVNKNVLAAIQERLPSFHQLLLDPPKTGVMKTTWGILDPPVGNTRLNVIRLIASLLQTNTHTINEELIELNTMGVILDMFFKYSWNNFLHTQVEICIALILASPGDSPEHSTISEENSAGDHVLLKHLFLKCHLIDRILEAWAMNEKRQSEGGQRYGYMGHLTRIVNCIVHSIEKGPNSVLAHQLVKDLPTDAQERWETFCTSSLSETNKRNTVDLVTTRHIHSSSDDEIEFKDPGFSQDSAIQQFGFNDEKFADQDDIGNVSFDRVSDINFSLNANESANIALFEACCKERIQQFDDGGSDEEDIWEEKNISYSQETQRRSSSGSTDSEESTDSEEEETIKQGFESSTVNHEDKMEVDANEASNWTANFDIPMETAHVANLDSDGSDVWSTEEPLSSKETDWASFSQLTSPINTKESVRSSSPVEMETSTEPVDPLSVNASAQTEVTVAMDAVSDGEEEGENADQMTETVMNGSMKETLSLTVDAKTETAVFKSEEGKLTTSHDSACKYGVVENSDTAMENPPSQPSSSSQEQRISEQIALDGASANGPV.

Disordered regions lie at residues 610–652 (NISY…VNHE), 683–778 (SDGS…MKET), and 793–850 (KSEE…NGPV). A compositionally biased stretch (acidic residues) spans 627 to 638 (DSEESTDSEEEE). Polar residues-rich tracts occupy residues 703 to 731 (ASFS…TSTE) and 764 to 778 (DQMT…MKET). The segment covering 826–839 (PSSSSQEQRISEQI) has biased composition (low complexity).

The protein belongs to the SAPS family.

In terms of biological role, regulatory subunit of protein phosphatase 6 (PP6). May function as a scaffolding PP6 subunit. This chain is Serine/threonine-protein phosphatase 6 regulatory subunit 3-B (ppp6r3-b), found in Xenopus laevis (African clawed frog).